Here is a 666-residue protein sequence, read N- to C-terminus: MSSPFVPIITADIDWRDDLPYSLQFDDIYYSAEGGINQSLYVFVEGNNLINRWQQLPTNESNVFTIAETGFGTGMNFLLTWKLWEKFAPQNARLHYISCDKHPLKKNDLIKCLQKWPELSVQAEKLIAHYPVLTPGYHHLTFSNNQITLTLMLGDVLECYEQLLFCGDINLEHQLRESYVNAWYLDGFSPSKNQSMWSDNLFTVIAMLSKESTTVATYSASSIVKTALTNAGFVIEKRKGFGPKRHMICAHYEKAYSSSKKNRHTPWHINYPVTKDERTALIVGGGLAGCFIANSLAKRGWEVTILEEKEKVGCGGSANQQAVLFPKLSTYKSPFTQFMLYSFLYANDVYKELLKYYDLGELKGSLLLAHNEKEKANQQSLIHWLELYPELGQLVDEKQSSELSGISLPCGGLFIPSSGWINSPELCDILIDNKRISLITGNRVQSINYNQKNWVVNGIEASVLILANGQQVNYFHETNHLPVKAIRGQMTTIQSTQESTKLKIPLCAEGHVLPALNNSHKVGASYDIGTSEPELNALDDQLNLARLKRIAPDIMWSQNVLDHWAGIRAASPDYLPIVGPLPNALEFKEIYSELKSNSKRWIAEAAPCYPNLYVCAAFGSRGLTTIPLATEWLAGLINKEISILPRKLIQAISPARFLRKKIIQGP.

The tRNA (mnm(5)s(2)U34)-methyltransferase stretch occupies residues 1–253 (MSSPFVPIIT…KRHMICAHYE (253 aa)). Residues 283 to 666 (VGGGLAGCFI…FLRKKIIQGP (384 aa)) are FAD-dependent cmnm(5)s(2)U34 oxidoreductase.

It in the N-terminal section; belongs to the methyltransferase superfamily. tRNA (mnm(5)s(2)U34)-methyltransferase family. This sequence in the C-terminal section; belongs to the DAO family. It depends on FAD as a cofactor.

The protein resides in the cytoplasm. It catalyses the reaction 5-aminomethyl-2-thiouridine(34) in tRNA + S-adenosyl-L-methionine = 5-methylaminomethyl-2-thiouridine(34) in tRNA + S-adenosyl-L-homocysteine + H(+). Functionally, catalyzes the last two steps in the biosynthesis of 5-methylaminomethyl-2-thiouridine (mnm(5)s(2)U) at the wobble position (U34) in tRNA. Catalyzes the FAD-dependent demodification of cmnm(5)s(2)U34 to nm(5)s(2)U34, followed by the transfer of a methyl group from S-adenosyl-L-methionine to nm(5)s(2)U34, to form mnm(5)s(2)U34. The polypeptide is tRNA 5-methylaminomethyl-2-thiouridine biosynthesis bifunctional protein MnmC (Legionella pneumophila subsp. pneumophila (strain Philadelphia 1 / ATCC 33152 / DSM 7513)).